Here is a 260-residue protein sequence, read N- to C-terminus: DNA repair protein RecO (260 aa).

This sequence belongs to the RecO family.

Involved in DNA repair and RecF pathway recombination. The sequence is that of DNA repair protein RecO from Streptococcus gordonii (strain Challis / ATCC 35105 / BCRC 15272 / CH1 / DL1 / V288).